The sequence spans 243 residues: NAD-dependent protein deacylase SIR2rp3 (243 aa).

One can recognise a Deacetylase sirtuin-type domain in the interval 1 to 239; that stretch reads MKACRCITIL…PTWVDQVLKE (239 aa). Position 12 to 31 (12 to 31) interacts with NAD(+); the sequence is GAGISAESGISTFRDSNGLW. Substrate is bound by residues tyrosine 56 and arginine 59. An NAD(+)-binding site is contributed by 95-98; it reads QNVD. Histidine 113 serves as the catalytic Proton acceptor. The Zn(2+) site is built by cysteine 121 and cysteine 141. Residues 181 to 183 and alanine 225 contribute to the NAD(+) site; that span reads GTS.

Belongs to the sirtuin family. Class III subfamily. The cofactor is Zn(2+).

The protein resides in the mitochondrion. The catalysed reaction is N(6)-malonyl-L-lysyl-[protein] + NAD(+) + H2O = 2''-O-malonyl-ADP-D-ribose + nicotinamide + L-lysyl-[protein]. It catalyses the reaction N(6)-succinyl-L-lysyl-[protein] + NAD(+) + H2O = 2''-O-succinyl-ADP-D-ribose + nicotinamide + L-lysyl-[protein]. The enzyme catalyses N(6)-glutaryl-L-lysyl-[protein] + NAD(+) + H2O = 2''-O-glutaryl-ADP-D-ribose + nicotinamide + L-lysyl-[protein]. Its function is as follows. NAD-dependent lysine demalonylase, desuccinylase and deglutarylase that specifically removes malonyl, succinyl and glutaryl groups on target proteins. Has weak NAD-dependent protein deacetylase activity; however this activity may not be physiologically relevant in vivo. In Leishmania major, this protein is NAD-dependent protein deacylase SIR2rp3 (SIR2rp3).